The sequence spans 514 residues: Protein nucleotidyltransferase YdiU (514 aa).

Positions 90, 92, 93, 113, 125, 126, 176, and 183 each coordinate ATP. Aspartate 267 functions as the Proton acceptor in the catalytic mechanism. Positions 268 and 277 each coordinate Mg(2+). Aspartate 277 lines the ATP pocket.

This sequence belongs to the SELO family. Requires Mg(2+) as cofactor. Mn(2+) is required as a cofactor.

It catalyses the reaction L-seryl-[protein] + ATP = 3-O-(5'-adenylyl)-L-seryl-[protein] + diphosphate. The enzyme catalyses L-threonyl-[protein] + ATP = 3-O-(5'-adenylyl)-L-threonyl-[protein] + diphosphate. It carries out the reaction L-tyrosyl-[protein] + ATP = O-(5'-adenylyl)-L-tyrosyl-[protein] + diphosphate. The catalysed reaction is L-histidyl-[protein] + UTP = N(tele)-(5'-uridylyl)-L-histidyl-[protein] + diphosphate. It catalyses the reaction L-seryl-[protein] + UTP = O-(5'-uridylyl)-L-seryl-[protein] + diphosphate. The enzyme catalyses L-tyrosyl-[protein] + UTP = O-(5'-uridylyl)-L-tyrosyl-[protein] + diphosphate. Functionally, nucleotidyltransferase involved in the post-translational modification of proteins. It can catalyze the addition of adenosine monophosphate (AMP) or uridine monophosphate (UMP) to a protein, resulting in modifications known as AMPylation and UMPylation. The protein is Protein nucleotidyltransferase YdiU of Photobacterium profundum (strain SS9).